The sequence spans 164 residues: General odorant-binding protein 1 (164 aa).

The N-terminal stretch at M1–A19 is a signal peptide. 3 cysteine pairs are disulfide-bonded: C38–C73, C69–C127, and C116–C136.

This sequence belongs to the PBP/GOBP family. As to expression, antenna.

Its function is as follows. Present in the aqueous fluid surrounding olfactory sensory dendrites and are thought to aid in the capture and transport of hydrophobic odorants into and through this fluid. This Heliothis virescens (Tobacco budworm moth) protein is General odorant-binding protein 1.